We begin with the raw amino-acid sequence, 393 residues long: Pyridoxamine--pyruvate transaminase (393 aa).

Pyridoxal 5'-phosphate-binding residues include Glu-68, Tyr-95, and Thr-146. Position 197 is an N6-(pyridoxal phosphate)lysine (Lys-197). Position 345 (Arg-345) interacts with pyridoxal 5'-phosphate.

The protein belongs to the class-V pyridoxal-phosphate-dependent aminotransferase family. In terms of assembly, homotetramer. The cofactor is pyridoxal 5'-phosphate.

It catalyses the reaction pyridoxamine + pyruvate = pyridoxal + L-alanine. Its function is as follows. Catalyzes a reversible transamination reaction between pyridoxamine and pyruvate to form pyridoxal and L-alanine. The protein is Pyridoxamine--pyruvate transaminase (ppaT) of Mesorhizobium japonicum (strain LMG 29417 / CECT 9101 / MAFF 303099) (Mesorhizobium loti (strain MAFF 303099)).